A 389-amino-acid polypeptide reads, in one-letter code: STE20-related kinase adapter protein alpha (389 aa).

The 311-residue stretch at 11-321 folds into the Protein kinase domain; the sequence is YELLTIIGRG…AGALLNHPFF (311 aa).

Belongs to the protein kinase superfamily. STE Ser/Thr protein kinase family. STE20 subfamily. In terms of assembly, component of a trimeric complex composed of STK11/LKB1, STRAD (STRADA or STRADB) and CAB39/MO25 (CAB39/MO25alpha or CAB39L/MO25beta): the complex tethers STK11/LKB1 in the cytoplasm and stimulates its catalytic activity. In terms of tissue distribution, expressed in brain, hypothalamus, heart and skeletal muscle.

The protein resides in the nucleus. It is found in the cytoplasm. In terms of biological role, pseudokinase which, in complex with CAB39/MO25 (CAB39/MO25alpha or CAB39L/MO25beta), binds to and activates STK11/LKB1. Adopts a closed conformation typical of active protein kinases and binds STK11/LKB1 as a pseudosubstrate, promoting conformational change of STK11/LKB1 in an active conformation. The polypeptide is STE20-related kinase adapter protein alpha (STRADA) (Gallus gallus (Chicken)).